Here is a 338-residue protein sequence, read N- to C-terminus: Ferrochelatase (338 aa).

Fe cation-binding residues include His-207 and Glu-293.

Belongs to the ferrochelatase family.

It localises to the cytoplasm. It catalyses the reaction heme b + 2 H(+) = protoporphyrin IX + Fe(2+). The protein operates within porphyrin-containing compound metabolism; protoheme biosynthesis; protoheme from protoporphyrin-IX: step 1/1. Functionally, catalyzes the ferrous insertion into protoporphyrin IX. This is Ferrochelatase from Shewanella denitrificans (strain OS217 / ATCC BAA-1090 / DSM 15013).